The sequence spans 246 residues: Zinc import ATP-binding protein ZnuC (246 aa).

The ABC transporter domain occupies 24–244 (LKIENLALAY…TLGEIFSSYI (221 aa)). 56–63 (GPNGGGKT) lines the ATP pocket.

It belongs to the ABC transporter superfamily. Zinc importer (TC 3.A.1.15.5) family. As to quaternary structure, the complex is composed of two ATP-binding proteins (ZnuC), two transmembrane proteins (ZnuB) and a solute-binding protein (ZnuA).

It is found in the cell membrane. It carries out the reaction Zn(2+)(out) + ATP(in) + H2O(in) = Zn(2+)(in) + ADP(in) + phosphate(in) + H(+)(in). In terms of biological role, part of the ABC transporter complex ZnuABC involved in zinc import. Responsible for energy coupling to the transport system. The chain is Zinc import ATP-binding protein ZnuC from Wolbachia sp. subsp. Brugia malayi (strain TRS).